The following is a 982-amino-acid chain: Protein phosphatase 1 regulatory subunit 12B (982 aa).

Basic and acidic residues predominate over residues 1–24 (MAELEHLGGKRAESARMRRAEQLR). Positions 1-50 (MAELEHLGGKRAESARMRRAEQLRRWRGSLTEQEPAERRGAGRQPLTRRG) are disordered. At serine 29 the chain carries Phosphoserine. ANK repeat units follow at residues 57–86 (EDGAVFLAACSSGDTDEVRKLLARGADINT), 90–119 (DGLTALHQACIDENLDMVKFLVENRANVNQ), 123–152 (EGWTPLHAAASCGYLNIAEYFINHGASVGI), 216–245 (SGATALHVAAAKGYSEVLRLLIQAGYELNV), and 249–278 (DGWTPLHAAAHWGVKEACSILAEALCDMDI). 4 disordered regions span residues 342 to 517 (EETP…RESA), 556 to 579 (RTPHKSQADTTAEKTADNVSSSTP), 606 to 864 (TDSS…EARE), and 918 to 948 (AQQKQEKTSDRSSVLEMEKRERRALERKMSE). The span at 362 to 374 (SEEEEGEDEASES) shows a compositional bias: acidic residues. Positions 375–385 (ETEKEADKKPE) are enriched in basic and acidic residues. Polar residues predominate over residues 389–401 (NHSNSESKSSITE). A compositionally biased stretch (low complexity) spans 411-421 (FSASSARRFSS). At threonine 445 the chain carries Phosphothreonine. Positions 466-478 (SSIYRSSSSPRIS) are enriched in low complexity. Basic and acidic residues predominate over residues 482–491 (DNKDKERENK). Residues 623–632 (VRDEEAESLR) show a composition bias toward basic and acidic residues. The span at 633–643 (KARSRQARQTR) shows a compositional bias: basic residues. Threonine 646 bears the Phosphothreonine mark. The segment covering 656-680 (EAERTFSRSRAERQAQEQPREKPTD) has biased composition (basic and acidic residues). Low complexity predominate over residues 731 to 742 (TTPASPSTSRPS). Polar residues predominate over residues 743–755 (LYTSSHLLWTNRF). The span at 797-807 (ERRRPKERRRG) shows a compositional bias: basic residues. The residue at position 808 (threonine 808) is a Phosphothreonine. Over residues 824–836 (EEVKETWHERLSR) the composition is skewed to basic and acidic residues. Serine 839 bears the Phosphoserine mark. Over residues 840-849 (GGSNPTTSDS) the composition is skewed to polar residues. Composition is skewed to basic and acidic residues over residues 850–864 (YGDRASARARREARE), 918–927 (AQQKQEKTSD), and 933–948 (EMEKRERRALERKMSE). A Phosphoserine modification is found at serine 947.

PP1 comprises a catalytic subunit, PPP1CA, PPP1CB or PPP1CC, and one or several targeting or regulatory subunits. PPP1R12B mediates binding to myosin. Isoform 3 and isoform 4 bind PPP1R12A, but not isoform 1 of PPP1R12B itself. Binds IL16. In terms of tissue distribution, detected in skeletal muscle, fetal and adult heart, brain, placenta, kidney, spleen, thymus, pancreas and lung. Isoform 3 and isoform 4 are heart specific.

It localises to the cytoplasm. It is found in the cytoskeleton. The protein resides in the stress fiber. In terms of biological role, regulates myosin phosphatase activity. Augments Ca(2+) sensitivity of the contractile apparatus. The protein is Protein phosphatase 1 regulatory subunit 12B (PPP1R12B) of Homo sapiens (Human).